A 187-amino-acid chain; its full sequence is Protein McbG (187 aa).

The protein belongs to the pentapeptide repeat protein family.

Its function is as follows. Together with proteins McbE and McbF this protein causes immunity to the peptide antibiotic microcin B17 (MccB17), which inhibits DNA replication in Enterobacteriaceae by induction of the SOS repair system. McbG alone can provide some protection. In Escherichia coli, this protein is Protein McbG (mcbG).